Reading from the N-terminus, the 433-residue chain is Cysteine--tRNA ligase (433 aa).

Cys-4 is a binding site for Zn(2+). The short motif at 6-16 (PTVYDTAHIGN) is the 'HIGH' region element. Zn(2+) is bound by residues Cys-188, His-213, and Glu-217. The 'KMSKS' region motif lies at 246–250 (KMSKS). Lys-249 contributes to the ATP binding site.

This sequence belongs to the class-I aminoacyl-tRNA synthetase family. Monomer. Requires Zn(2+) as cofactor.

Its subcellular location is the cytoplasm. The catalysed reaction is tRNA(Cys) + L-cysteine + ATP = L-cysteinyl-tRNA(Cys) + AMP + diphosphate. In Wolbachia sp. subsp. Brugia malayi (strain TRS), this protein is Cysteine--tRNA ligase.